Consider the following 418-residue polypeptide: Cobalt-zinc-cadmium resistance protein CzcC (418 aa).

The N-terminal stretch at 1–22 (MRRLFLPLGLAVAFLSPNFAVA) is a signal peptide.

It belongs to the outer membrane factor (OMF) (TC 1.B.17) family.

The protein resides in the cell outer membrane. Functionally, czcC protein appears to modify the specificity of the system, perhaps by acting on the CzcB protein. When the CzcC protein is added to CzcA and CzcB, the efflux system gains specificity for cadmium and cobalt. The chain is Cobalt-zinc-cadmium resistance protein CzcC (czcC) from Cupriavidus metallidurans (strain ATCC 43123 / DSM 2839 / NBRC 102507 / CH34) (Ralstonia metallidurans).